The chain runs to 999 residues: Ulvan lyase, long isoform (999 aa).

Residues 1-21 (MKCLKTLLVSTTLLGAFSLNA) form the signal peptide. 126-127 (SH) is a binding site for substrate. His-127 functions as the Proton donor/acceptor in the catalytic mechanism. Residues Asp-189, Asp-199, and Lys-201 each contribute to the Ca(2+) site. 2 residues coordinate substrate: Tyr-280 and Arg-297. Positions 300, 303, and 305 each coordinate Ca(2+). Tyr-361 is a binding site for substrate.

This sequence belongs to the polysaccharide lyase 24 family.

Its function is as follows. Ulvan lyase involved in ulvan degradation. Ulvan is the main polysaccharide component of the Ulvales (green seaweed) cell wall. It is composed of disaccharide building blocks comprising 3-sulfated rhamnose (Rha3S) linked to D-glucuronic acid (GlcA), L-iduronic acid (IduA), or D-xylose (Xyl). Ulvan lyase catalyzes preferentially the endolytic cleavage of the glycosidic bond between Rha3S and the uronic acid GlcA, but not IduA, producing oligosaccharides that have unsaturated 4-deoxy-L-threo-hex-4-enopyranosiduronic acid (deltaUA) at the non-reducing end. The most abundant end products in the degradation of the ulvan polysaccharide were deltaUA-Rha3S disaccharides and deltaUA-Rha3S-IduA-Rha3S and deltaUA-Rha3S-Xyl-Rha3S tetrasaccharides. This chain is Ulvan lyase, long isoform, found in Alteromonas sp.